Reading from the N-terminus, the 205-residue chain is MDPAWRRRIHVSNPTTINVEPRPRRESLRRQLLSQLFFKKMSQLFKKKRQTRPSTVWYGRVAFPPSAWQGPARVSPYGYESDSENEEYTRISSATSSNVLTDSPTTTQDDPTGRCTDAYAESPAVLHLDDVTRNHRGAAALPSEVYLDGFCDQHKDPSGRMGPIKRRLYSKTFCRKFAAINIILLMLQILVLIGIVYRGFGKECM.

The tract at residues 72-114 is disordered; it reads ARVSPYGYESDSENEEYTRISSATSSNVLTDSPTTTQDDPTGR. Positions 90–100 are enriched in polar residues; sequence RISSATSSNVL. The span at 101–110 shows a compositional bias: low complexity; it reads TDSPTTTQDD.

This is an uncharacterized protein from Equus caballus (Horse).